An 84-amino-acid polypeptide reads, in one-letter code: Small ribosomal subunit protein uS15 (84 aa).

This sequence belongs to the universal ribosomal protein uS15 family. As to quaternary structure, part of the 30S ribosomal subunit. Forms a bridge to the 50S subunit in the 70S ribosome, contacting the 23S rRNA.

One of the primary rRNA binding proteins, it binds directly to 16S rRNA where it helps nucleate assembly of the platform of the 30S subunit by binding and bridging several RNA helices of the 16S rRNA. Functionally, forms an intersubunit bridge (bridge B4) with the 23S rRNA of the 50S subunit in the ribosome. The sequence is that of Small ribosomal subunit protein uS15 from Thermosipho melanesiensis (strain DSM 12029 / CIP 104789 / BI429).